A 352-amino-acid chain; its full sequence is F-box/kelch-repeat protein SKIP30 (352 aa).

The 47-residue stretch at Ser9–Arg55 folds into the F-box domain. 5 Kelch repeats span residues Glu57–Gly109, Met110–Gly167, Lys168–Asn215, Tyr243–Leu293, and Glu296–Thr351.

Part of a SCF (ASK-cullin-F-box) protein ligase complex. Interacts with SKP1A/ASK1.

The protein operates within protein modification; protein ubiquitination. Functionally, component of SCF(ASK-cullin-F-box) E3 ubiquitin ligase complexes, which may mediate the ubiquitination and subsequent proteasomal degradation of target proteins. This is F-box/kelch-repeat protein SKIP30 (SKIP30) from Arabidopsis thaliana (Mouse-ear cress).